The chain runs to 881 residues: Glutamate--tRNA ligase (881 aa).

The interval 1-480 is glutamyl-tRNA synthetase; it reads MSVRVRLAPS…ILRFKKSIGQ (480 aa). The 'HIGH' region motif lies at 9-19; the sequence is PSPTGNLHIGT. The 'KMSKS' region signature appears at 248–252; that stretch reads KLSKR. K251 is an ATP binding site. The interval 481 to 881 is unknown; it reads EIEDTKIEDT…IKREIFGKPS (401 aa). Basic and acidic residues predominate over residues 488 to 502; sequence EDTKKAETTPHKSKG. The tract at residues 488–747 is disordered; that stretch reads EDTKKAETTP…PTATDAETRE (260 aa). Low complexity predominate over residues 522–548; sequence QTQTTKPPKKGQTATPVATTPTATDVT. The span at 549 to 562 shows a compositional bias: polar residues; it reads ENTSVGTQETQSQI. Low complexity predominate over residues 563–576; the sequence is TTPVATTPTATDVT. Residues 577 to 590 show a composition bias toward polar residues; sequence ENTSVGTQETQSQI. Residues 591–604 are compositionally biased toward low complexity; it reads TTPVATTPTATDVT. The span at 605 to 618 shows a compositional bias: polar residues; that stretch reads ENTSVETQETQSQI. A compositionally biased stretch (low complexity) spans 619–632; the sequence is TTPVATTPTATDVT. Positions 633 to 646 are enriched in polar residues; it reads ENTSVETQETQSQI. Positions 647–660 are enriched in low complexity; it reads TTPVATTPTATDVT. Residues 661 to 674 are compositionally biased toward polar residues; the sequence is ENTSVGTQETQSQI. A compositionally biased stretch (low complexity) spans 675 to 688; it reads TTPVATTPTATDVT. Over residues 689–702 the composition is skewed to polar residues; that stretch reads ENTSVETQETQSQI. Over residues 703 to 720 the composition is skewed to low complexity; the sequence is TTPVATTSTATDVTENTS. The segment covering 721–730 has biased composition (polar residues); the sequence is VETQETQSQI. Over residues 731–742 the composition is skewed to low complexity; that stretch reads TTPVATTPTATD. 2 helical membrane-spanning segments follow: residues 809–829 and 832–852; these read LFGW…VIEA and GIPI…VWFV.

The protein belongs to the class-I aminoacyl-tRNA synthetase family. Glutamate--tRNA ligase type 1 subfamily. As to quaternary structure, monomer.

Its subcellular location is the cytoplasm. The protein localises to the cell membrane. It carries out the reaction tRNA(Glu) + L-glutamate + ATP = L-glutamyl-tRNA(Glu) + AMP + diphosphate. Catalyzes the attachment of glutamate to tRNA(Glu) in a two-step reaction: glutamate is first activated by ATP to form Glu-AMP and then transferred to the acceptor end of tRNA(Glu). The chain is Glutamate--tRNA ligase (gltX) from Trichodesmium erythraeum (strain IMS101).